A 480-amino-acid polypeptide reads, in one-letter code: Probable glycine dehydrogenase (decarboxylating) subunit 2 (480 aa).

Lys-265 carries the post-translational modification N6-(pyridoxal phosphate)lysine.

It belongs to the GcvP family. C-terminal subunit subfamily. The glycine cleavage system is composed of four proteins: P, T, L and H. In this organism, the P 'protein' is a heterodimer of two subunits. Pyridoxal 5'-phosphate is required as a cofactor.

The enzyme catalyses N(6)-[(R)-lipoyl]-L-lysyl-[glycine-cleavage complex H protein] + glycine + H(+) = N(6)-[(R)-S(8)-aminomethyldihydrolipoyl]-L-lysyl-[glycine-cleavage complex H protein] + CO2. In terms of biological role, the glycine cleavage system catalyzes the degradation of glycine. The P protein binds the alpha-amino group of glycine through its pyridoxal phosphate cofactor; CO(2) is released and the remaining methylamine moiety is then transferred to the lipoamide cofactor of the H protein. This Thermosipho africanus (strain TCF52B) protein is Probable glycine dehydrogenase (decarboxylating) subunit 2.